The sequence spans 373 residues: Asporin (373 aa).

The N-terminal stretch at 1-15 (MKEYVMLLLLAVCSA) is a signal peptide. Positions 16–32 (KPFFSPSHTALKNMMLK) are excised as a propeptide. Ser-48 carries an O-linked (GalNAc...) serine glycan. Residues 59 to 95 (FFPFDLFPTCPFGCQCYSRVVHCSDLGLTSVPNNIPF) form the LRRNT domain. 2 cysteine pairs are disulfide-bonded: Cys-68/Cys-74 and Cys-72/Cys-81. LRR repeat units lie at residues 96–117 (DTRMVDLQNNKIKEIKENDFKG), 120–141 (SLYALILNNNKLTKIHPKTFLT), 144–166 (KLRRLYLSHNQLSEIPLNLPKSL), 167–186 (AELRIHDNKVKKIQKDTFKG), 189–212 (ALHVLEMSANPLENNGIEPGAFEG), 235–255 (TLLELHLDFNKISTVELEDLK), 259–280 (ELQRLGLGNNRITDIENGTFAN), 283–305 (RVREIHLEHNKLKKIPSGLQELK), 306–327 (YLQIIFLHYNSIAKVGVNDFCP), 328–349 (TVPKMKKSLYSAISLFNNPMKY), and 350–373 (WEIQPATFRCVLGRMSVQLGNVGK). An interaction with TGFB1 region spans residues 159–205 (PLNLPKSLAELRIHDNKVKKIQKDTFKGMNALHVLEMSANPLENNGI). The N-linked (GlcNAc...) asparagine glycan is linked to Asn-275. A disulfide bridge links Cys-326 with Cys-359.

It belongs to the small leucine-rich proteoglycan (SLRP) family. SLRP class I subfamily. In terms of assembly, interacts with type I collagen. DCN can inhibit collagen binding. Interacts with TGFB1, TGFB2 and TGFB3. DCN, BGN, and FMOD inhibit binding to TGFB1. Interacts with BMP2. Interacts in vitro with type II collagen. In terms of tissue distribution, higher expression in heart, also detected in kidney, stomach, testes, and skin but only weakly in lung, skeletal muscle, small intestine, and thymus. Expressed specifically and predominantly in the periodontal ligament (PDL). During tooth development, strong expression is seen in the dental follicle, which is the progenitor tissue that forms cementum, alveolar bone, and the PDL. Expressed in the perichondria of the maxilla, mandible, vertebrae, and long bones. Predominantly expressed in the perichondrium/periosteum of long bones (at protein level).

Its subcellular location is the secreted. It is found in the extracellular space. The protein resides in the extracellular matrix. Its function is as follows. Binds calcium and plays a role in osteoblast-driven collagen biomineralization activity. Critical regulator of TGF-beta in articular cartilage and plays an essential role in cartilage homeostasis and osteoarthritis (OA) pathogenesis. Negatively regulates chondrogenesis in the articular cartilage by blocking the TGF-beta/receptor interaction on the cell surface and inhibiting the canonical TGF-beta/Smad signal. Negatively regulates periodontal ligament (PDL) differentiation and mineralization to ensure that the PDL is not ossified and to maintain homeostasis of the tooth-supporting system. Inhibits BMP2-induced cytodifferentiation of PDL cells by preventing its binding to BMPR1B/BMP type-1B receptor, resulting in inhibition of BMP-dependent activation of SMAD proteins. Inhibits the interaction between TGFB1 and TGF-beta receptor type II in the presence of heparin/heparan sulfate in vitro. The chain is Asporin (Aspn) from Mus musculus (Mouse).